The sequence spans 425 residues: Sucrose-phosphatase 2 (425 aa).

The protein belongs to the sucrose phosphatase family. In terms of assembly, homodimer. Mg(2+) is required as a cofactor.

The catalysed reaction is sucrose 6(F)-phosphate + H2O = sucrose + phosphate. Its pathway is glycan biosynthesis; sucrose biosynthesis; sucrose from D-fructose 6-phosphate and UDP-alpha-D-glucose: step 2/2. With respect to regulation, inhibited by EDTA. Its function is as follows. Catalyzes the final step of sucrose synthesis. This chain is Sucrose-phosphatase 2 (SPP2), found in Nicotiana tabacum (Common tobacco).